We begin with the raw amino-acid sequence, 442 residues long: Proline--tRNA ligase (442 aa).

Belongs to the class-II aminoacyl-tRNA synthetase family. ProS type 2 subfamily. In terms of assembly, homodimer.

It localises to the cytoplasm. The enzyme catalyses tRNA(Pro) + L-proline + ATP = L-prolyl-tRNA(Pro) + AMP + diphosphate. Functionally, catalyzes the attachment of proline to tRNA(Pro) in a two-step reaction: proline is first activated by ATP to form Pro-AMP and then transferred to the acceptor end of tRNA(Pro). This chain is Proline--tRNA ligase, found in Mesorhizobium japonicum (strain LMG 29417 / CECT 9101 / MAFF 303099) (Mesorhizobium loti (strain MAFF 303099)).